A 67-amino-acid polypeptide reads, in one-letter code: Large ribosomal subunit protein uL29 (67 aa).

Belongs to the universal ribosomal protein uL29 family.

This chain is Large ribosomal subunit protein uL29, found in Exiguobacterium sibiricum (strain DSM 17290 / CCUG 55495 / CIP 109462 / JCM 13490 / 255-15).